Reading from the N-terminus, the 190-residue chain is uncharacterized protein (190 aa).

Disordered stretches follow at residues 1 to 21 (MALR…ATVG) and 155 to 190 (PEMG…TQAS). Positions 181–190 (SPSSHPTQAS) are enriched in low complexity.

This is an uncharacterized protein from Homo sapiens (Human).